The chain runs to 583 residues: Protein LONG AFTER FAR-RED 3 (583 aa).

A helical transmembrane segment spans residues 7–27 (FPVMIGFVSAAVFLLISVAYL). 2 N-linked (GlcNAc...) asparagine glycosylation sites follow: Asn55 and Asn374.

Belongs to the metallo-dependent hydrolases superfamily. In terms of tissue distribution, expressed at low level in seedlings, roots, leaves, stems, flowers, and siliques.

Its subcellular location is the membrane. The protein resides in the cytoplasm. The protein localises to the perinuclear region. Its function is as follows. Required for phyA-controlled responses to continuous far-red light (FRc) conditions, including the inhibition of hypocotyl elongation and the regulation of XTH15/XTR7 expression. The sequence is that of Protein LONG AFTER FAR-RED 3 from Arabidopsis thaliana (Mouse-ear cress).